The following is a 508-amino-acid chain: UTP--glucose-1-phosphate uridylyltransferase (508 aa).

Ser-13 carries the post-translational modification Phosphoserine. Residues 113-116 (LNGG), Lys-127, Gln-190, and Gly-222 each bind UTP. 115-116 (GG) lines the substrate pocket. Position 127 (Lys-127) interacts with Mg(2+). Substrate-binding positions include His-223 and 251-253 (NID). UTP-binding residues include Asp-253 and Lys-396. Asp-253 lines the Mg(2+) pocket. Lys-396 is a catalytic residue. Thr-426 carries the post-translational modification Phosphothreonine. Ser-434 bears the Phosphoserine mark. At Lys-438 the chain carries N6-acetyllysine. 2 positions are modified to phosphoserine: Ser-448 and Ser-461. Residues 457–508 (HLTVSGDVTFGKNVSLKGTVIIIANHGDRIDIPPGAVLENKIVSGNLRILDH) form an oligomerization region. The interval 502–503 (NL) is critical for end-to-end subunit interaction.

Belongs to the UDPGP type 1 family. In terms of assembly, homooctamer.

It localises to the cytoplasm. It catalyses the reaction alpha-D-glucose 1-phosphate + UTP + H(+) = UDP-alpha-D-glucose + diphosphate. It participates in glycan biosynthesis; glycogen biosynthesis. Its function is as follows. UTP--glucose-1-phosphate uridylyltransferase catalyzing the conversion of glucose-1-phosphate into UDP-glucose, a crucial precursor for the production of glycogen. The sequence is that of UTP--glucose-1-phosphate uridylyltransferase (UGP2) from Cricetulus griseus (Chinese hamster).